The chain runs to 879 residues: Phosphoenolpyruvate carboxylase (879 aa).

Catalysis depends on residues His-138 and Lys-545.

This sequence belongs to the PEPCase type 1 family. Requires Mg(2+) as cofactor.

It catalyses the reaction oxaloacetate + phosphate = phosphoenolpyruvate + hydrogencarbonate. Forms oxaloacetate, a four-carbon dicarboxylic acid source for the tricarboxylic acid cycle. This is Phosphoenolpyruvate carboxylase (ppc) from Haemophilus influenzae (strain ATCC 51907 / DSM 11121 / KW20 / Rd).